The sequence spans 87 residues: Small ribosomal subunit protein uS17 (87 aa).

The protein belongs to the universal ribosomal protein uS17 family. As to quaternary structure, part of the 30S ribosomal subunit.

One of the primary rRNA binding proteins, it binds specifically to the 5'-end of 16S ribosomal RNA. The sequence is that of Small ribosomal subunit protein uS17 from Thioalkalivibrio sulfidiphilus (strain HL-EbGR7).